The chain runs to 921 residues: Eukaryotic translation initiation factor 3 subunit A (921 aa).

The PCI domain occupies Phe-319–Phe-493. A disordered region spans residues Gly-497–Glu-524. Over residues Asp-506 to Thr-517 the composition is skewed to basic and acidic residues. Coiled coils occupy residues Ala-562–Thr-647 and Glu-693–Asn-868. A compositionally biased stretch (basic and acidic residues) spans Ala-818 to Ile-865. The interval Ala-818 to Ala-921 is disordered. A compositionally biased stretch (pro residues) spans Pro-873 to Arg-890. The span at Pro-903–Met-913 shows a compositional bias: basic and acidic residues.

This sequence belongs to the eIF-3 subunit A family. In terms of assembly, component of the eukaryotic translation initiation factor 3 (eIF-3) complex.

The protein resides in the cytoplasm. RNA-binding component of the eukaryotic translation initiation factor 3 (eIF-3) complex, which is involved in protein synthesis of a specialized repertoire of mRNAs and, together with other initiation factors, stimulates binding of mRNA and methionyl-tRNAi to the 40S ribosome. The eIF-3 complex specifically targets and initiates translation of a subset of mRNAs involved in cell proliferation. This is Eukaryotic translation initiation factor 3 subunit A from Eremothecium gossypii (strain ATCC 10895 / CBS 109.51 / FGSC 9923 / NRRL Y-1056) (Yeast).